We begin with the raw amino-acid sequence, 294 residues long: UDP-3-O-acyl-N-acetylglucosamine deacetylase (294 aa).

Residues H75, H232, and D236 each coordinate Zn(2+). The active-site Proton donor is the H259.

Belongs to the LpxC family. It depends on Zn(2+) as a cofactor.

The catalysed reaction is a UDP-3-O-[(3R)-3-hydroxyacyl]-N-acetyl-alpha-D-glucosamine + H2O = a UDP-3-O-[(3R)-3-hydroxyacyl]-alpha-D-glucosamine + acetate. It functions in the pathway glycolipid biosynthesis; lipid IV(A) biosynthesis; lipid IV(A) from (3R)-3-hydroxytetradecanoyl-[acyl-carrier-protein] and UDP-N-acetyl-alpha-D-glucosamine: step 2/6. In terms of biological role, catalyzes the hydrolysis of UDP-3-O-myristoyl-N-acetylglucosamine to form UDP-3-O-myristoylglucosamine and acetate, the committed step in lipid A biosynthesis. The polypeptide is UDP-3-O-acyl-N-acetylglucosamine deacetylase (Campylobacter fetus subsp. fetus (strain 82-40)).